The chain runs to 344 residues: Uroporphyrinogen decarboxylase (344 aa).

Residues 23 to 27 (RQAGR), Asp73, Tyr149, Thr204, and His321 each bind substrate.

Belongs to the uroporphyrinogen decarboxylase family. Homodimer.

It is found in the cytoplasm. The enzyme catalyses uroporphyrinogen III + 4 H(+) = coproporphyrinogen III + 4 CO2. The protein operates within porphyrin-containing compound metabolism; protoporphyrin-IX biosynthesis; coproporphyrinogen-III from 5-aminolevulinate: step 4/4. In terms of biological role, catalyzes the decarboxylation of four acetate groups of uroporphyrinogen-III to yield coproporphyrinogen-III. The chain is Uroporphyrinogen decarboxylase from Francisella tularensis subsp. mediasiatica (strain FSC147).